The chain runs to 276 residues: UPF0276 protein Caul_0757 (276 aa).

Belongs to the UPF0276 family.

The chain is UPF0276 protein Caul_0757 from Caulobacter sp. (strain K31).